Consider the following 88-residue polypeptide: Small ribosomal subunit protein uS17 (88 aa).

Belongs to the universal ribosomal protein uS17 family. Part of the 30S ribosomal subunit.

Functionally, one of the primary rRNA binding proteins, it binds specifically to the 5'-end of 16S ribosomal RNA. This is Small ribosomal subunit protein uS17 from Lactobacillus gasseri (strain ATCC 33323 / DSM 20243 / BCRC 14619 / CIP 102991 / JCM 1131 / KCTC 3163 / NCIMB 11718 / NCTC 13722 / AM63).